A 645-amino-acid chain; its full sequence is Zinc finger and SCAN domain-containing protein 2 (645 aa).

3 disordered regions span residues 1–25 (MMAA…EEDR), 37–75 (DDSW…GPQG), and 193–230 (EMPE…HGEV). Residues 59 to 132 (SAGKGSPQEE…ALVEDLTQTL (74 aa)) form the SCAN box domain. The segment covering 199–214 (SAQHSDGESDFERDAG) has biased composition (basic and acidic residues). C2H2-type zinc fingers lie at residues 253–275 (YECP…ERTH), 281–303 (YKCD…QTTH), 309–331 (YKCR…QRIH), 337–359 (FQCA…QRTH), 365–387 (YSCP…QGIH), 393–415 (YECK…QRIH), 421–443 (YKCT…RRTH), 449–471 (YQCS…RRTH), 477–499 (YKCG…QGMH), 505–527 (YECL…QRIH), 533–555 (YKCS…QQTH), 561–583 (YKCL…QRAH), 589–611 (YRCP…QRIH), and 617–639 (YKCP…QRTH).

This sequence belongs to the krueppel C2H2-type zinc-finger protein family.

Its subcellular location is the nucleus. May be involved in transcriptional regulation during the post-meiotic stages of spermatogenesis. This is Zinc finger and SCAN domain-containing protein 2 (ZSCAN2) from Pongo abelii (Sumatran orangutan).